A 418-amino-acid polypeptide reads, in one-letter code: Gamma-glutamyl phosphate reductase (418 aa).

This sequence belongs to the gamma-glutamyl phosphate reductase family.

It localises to the cytoplasm. It catalyses the reaction L-glutamate 5-semialdehyde + phosphate + NADP(+) = L-glutamyl 5-phosphate + NADPH + H(+). The protein operates within amino-acid biosynthesis; L-proline biosynthesis; L-glutamate 5-semialdehyde from L-glutamate: step 2/2. In terms of biological role, catalyzes the NADPH-dependent reduction of L-glutamate 5-phosphate into L-glutamate 5-semialdehyde and phosphate. The product spontaneously undergoes cyclization to form 1-pyrroline-5-carboxylate. The sequence is that of Gamma-glutamyl phosphate reductase from Chlorobium limicola (strain DSM 245 / NBRC 103803 / 6330).